Here is a 383-residue protein sequence, read N- to C-terminus: Serpin B5 (383 aa).

4 N-linked (GlcNAc...) asparagine glycosylation sites follow: N106, N133, N176, and N361.

It belongs to the serpin family. Ov-serpin subfamily.

The protein localises to the secreted. The protein resides in the extracellular space. Its function is as follows. May not exhibit serine protease inhibitory activity. The chain is Serpin B5 (serpinb5) from Xenopus laevis (African clawed frog).